The chain runs to 273 residues: 2,3,4,5-tetrahydropyridine-2,6-dicarboxylate N-succinyltransferase (273 aa).

2 residues coordinate substrate: R104 and D141.

This sequence belongs to the transferase hexapeptide repeat family. In terms of assembly, homotrimer.

Its subcellular location is the cytoplasm. The enzyme catalyses (S)-2,3,4,5-tetrahydrodipicolinate + succinyl-CoA + H2O = (S)-2-succinylamino-6-oxoheptanedioate + CoA. It functions in the pathway amino-acid biosynthesis; L-lysine biosynthesis via DAP pathway; LL-2,6-diaminopimelate from (S)-tetrahydrodipicolinate (succinylase route): step 1/3. In Chromobacterium violaceum (strain ATCC 12472 / DSM 30191 / JCM 1249 / CCUG 213 / NBRC 12614 / NCIMB 9131 / NCTC 9757 / MK), this protein is 2,3,4,5-tetrahydropyridine-2,6-dicarboxylate N-succinyltransferase.